A 171-amino-acid chain; its full sequence is MTKQHAFTREDLLRCSRGELFGPGNAQLPAPNMLMVDRITHISEEGGKYGKGELVAELDINPDLWFFACHFEGDPVMPGCLGLDAMWQLVGFFLGWQGLPGRGRALGSGEVKFFGQVLPEAKKVTYNIHIKRVLKGKLNMAIADGSVSVDGREIYTAEGLRVGVFTSTDNF.

Histidine 70 is an active-site residue.

Belongs to the thioester dehydratase family. FabA subfamily. Homodimer.

The protein resides in the cytoplasm. It carries out the reaction a (3R)-hydroxyacyl-[ACP] = a (2E)-enoyl-[ACP] + H2O. The enzyme catalyses (3R)-hydroxydecanoyl-[ACP] = (2E)-decenoyl-[ACP] + H2O. The catalysed reaction is (2E)-decenoyl-[ACP] = (3Z)-decenoyl-[ACP]. It functions in the pathway lipid metabolism; fatty acid biosynthesis. In terms of biological role, necessary for the introduction of cis unsaturation into fatty acids. Catalyzes the dehydration of (3R)-3-hydroxydecanoyl-ACP to E-(2)-decenoyl-ACP and then its isomerization to Z-(3)-decenoyl-ACP. Can catalyze the dehydratase reaction for beta-hydroxyacyl-ACPs with saturated chain lengths up to 16:0, being most active on intermediate chain length. The chain is 3-hydroxydecanoyl-[acyl-carrier-protein] dehydratase from Pseudomonas putida (strain ATCC 700007 / DSM 6899 / JCM 31910 / BCRC 17059 / LMG 24140 / F1).